Consider the following 373-residue polypeptide: Histone-lysine N-methyltransferase SETD7 (373 aa).

A disordered region spans residues M1–D20. 3 MORN repeats span residues F36–T58, L59–A81, and F106–C128. Residues Q214–G336 form the SET domain. S-adenosyl-L-methionine contacts are provided by residues A226–E228, N296, and H297.

It belongs to the class V-like SAM-binding methyltransferase superfamily. Histone-lysine methyltransferase family. SET7 subfamily.

The protein resides in the nucleus. It localises to the chromosome. The catalysed reaction is L-lysyl(4)-[histone H3] + S-adenosyl-L-methionine = N(6)-methyl-L-lysyl(4)-[histone H3] + S-adenosyl-L-homocysteine + H(+). The enzyme catalyses L-lysyl-[protein] + S-adenosyl-L-methionine = N(6)-methyl-L-lysyl-[protein] + S-adenosyl-L-homocysteine + H(+). Functionally, histone methyltransferase that specifically monomethylates 'Lys-4' of histone H3. H3 'Lys-4' methylation represents a specific tag for epigenetic transcriptional activation. Plays a central role in the transcriptional activation of genes. Also has methyltransferase activity toward non-histone proteins. This Danio rerio (Zebrafish) protein is Histone-lysine N-methyltransferase SETD7 (setd7).